The following is a 535-amino-acid chain: UDP-glycosyltransferase stmC (535 aa).

N-linked (GlcNAc...) asparagine glycosylation is found at asparagine 70 and asparagine 422. Residues alanine 506–alanine 526 traverse the membrane as a helical segment.

This sequence belongs to the glycosyltransferase 28 family.

It is found in the membrane. The enzyme catalyses stromemycin aglycone + UDP-alpha-D-glucose = stromemycin + UDP + H(+). The catalysed reaction is exophillate aglycone + UDP-alpha-D-glucose = exophillate + UDP + H(+). It functions in the pathway mycotoxin biosynthesis. UDP-glycosyltransferase; part of the gene cluster that mediates the biosynthesis of stromemycin, a depside C-glucoside with two unsaturated C9 side chains belonging to aromatic polyketide glycosides. Acts as the tailoring enzyme responsible for 3-C-glucosylation of bininalkenylresorcylic acid produced by the combined action of the HR-PKS stmA and the NR-PKS stmB to yield stromemycin. Possesses a relatively strict acceptor specificity towards bininalkenylresorcylic acid for C-glycosylation, but is able to use several donors including UDP-alpha-D-galactose, UDP-alpha-D-xylose, UDP-alpha-D-4-keto-6-deoxyglucose, UDP-alpha-D-quinovose, and UDP-beta-L-rhamnose. This is UDP-glycosyltransferase stmC from Aspergillus ustus.